Reading from the N-terminus, the 122-residue chain is MIQTQTYLNVADNSGARELMCIRILGASNRRYANIGDIIVAVIKEAVPNMPLERSEVIRAVIVRTCKELKRDNGMIIRYDDNAAVVIDQEGNPKGTRVFGAIARELRQLNFTKIVSLAPEVL.

The protein belongs to the universal ribosomal protein uL14 family. In terms of assembly, part of the 50S ribosomal subunit.

The protein resides in the plastid. It is found in the chloroplast. Functionally, binds to 23S rRNA. In Piper cenocladum (Ant piper), this protein is Large ribosomal subunit protein uL14c.